Consider the following 254-residue polypeptide: 5'/3'-nucleotidase SurE (254 aa).

Asp-8, Asp-9, Ser-39, and Asn-92 together coordinate a divalent metal cation.

Belongs to the SurE nucleotidase family. Requires a divalent metal cation as cofactor.

The protein resides in the cytoplasm. The enzyme catalyses a ribonucleoside 5'-phosphate + H2O = a ribonucleoside + phosphate. It carries out the reaction a ribonucleoside 3'-phosphate + H2O = a ribonucleoside + phosphate. The catalysed reaction is [phosphate](n) + H2O = [phosphate](n-1) + phosphate + H(+). In terms of biological role, nucleotidase with a broad substrate specificity as it can dephosphorylate various ribo- and deoxyribonucleoside 5'-monophosphates and ribonucleoside 3'-monophosphates with highest affinity to 3'-AMP. Also hydrolyzes polyphosphate (exopolyphosphatase activity) with the preference for short-chain-length substrates (P20-25). Might be involved in the regulation of dNTP and NTP pools, and in the turnover of 3'-mononucleotides produced by numerous intracellular RNases (T1, T2, and F) during the degradation of various RNAs. This Edwardsiella ictaluri (strain 93-146) protein is 5'/3'-nucleotidase SurE.